Here is a 457-residue protein sequence, read N- to C-terminus: Metal tolerance protein C4 (457 aa).

Residues 1-115 (MQSSHRILSR…IEINDQHSQR (115 aa)) are Cytoplasmic-facing. Residues 116–136 (AVTTALWCNFLVFSLKFGVWW) form a helical membrane-spanning segment. Residues 137 to 141 (TSSSH) are Vacuolar-facing. Residues 142-162 (VIMAEVVHSVADFANQALLAY) traverse the membrane as a helical segment. The Cytoplasmic portion of the chain corresponds to 163–183 (GLSSSRRAPDALHPYGYSKER). The helical transmembrane segment at 184-204 (FVWSLISAVGIFCLGSGATIV) threads the bilayer. The Vacuolar portion of the chain corresponds to 205–220 (NGVQNLWTSSPPPNME). A helical membrane pass occupies residues 221–241 (LAAVVIGGSFLIEGASLLVAI). Topologically, residues 242-267 (QSVKKGAAQEGMTIRDYIWRGHDPTS) are cytoplasmic. The helical transmembrane segment at 268–288 (VAVMTEDGAAVAGLAIAAASL) threads the bilayer. Topologically, residues 289-297 (VAVRMTGNP) are vacuolar. A helical transmembrane segment spans residues 298–318 (IYDPIGSIVVGNLLGMVAIFL). The Cytoplasmic portion of the chain corresponds to 319–457 (IQRNRHALIG…HNPTPTDPSL (139 aa)).

Belongs to the cation diffusion facilitator (CDF) transporter (TC 2.A.4) family.

It is found in the vacuole membrane. Its function is as follows. Involved in sequestration of excess metal in the cytoplasm into vacuoles to maintain metal homeostasis. This chain is Metal tolerance protein C4 (MTPC4), found in Arabidopsis thaliana (Mouse-ear cress).